Reading from the N-terminus, the 65-residue chain is DNA gyrase inhibitor YacG (65 aa).

The Zn(2+) site is built by Cys-9, Cys-12, Cys-28, and Cys-32. The disordered stretch occupies residues 44 to 65 (EKRIPSSSDLSESDDWSEEPKQ). The span at 54–65 (SESDDWSEEPKQ) shows a compositional bias: acidic residues.

Belongs to the DNA gyrase inhibitor YacG family. In terms of assembly, interacts with GyrB. Requires Zn(2+) as cofactor.

Its function is as follows. Inhibits all the catalytic activities of DNA gyrase by preventing its interaction with DNA. Acts by binding directly to the C-terminal domain of GyrB, which probably disrupts DNA binding by the gyrase. This Escherichia coli O6:H1 (strain CFT073 / ATCC 700928 / UPEC) protein is DNA gyrase inhibitor YacG.